The primary structure comprises 452 residues: Major royal jelly protein 2 (452 aa).

A signal peptide spans 1 to 17 (MTRWLFMVACLGIACQG). N-linked (GlcNAc...) asparagine glycosylation is found at Asn145 and Asn178. The interval 416–452 (NNNQNDNIQNTNNQNDNNQKNNKKNANNQKNNNQNDN) is disordered.

In terms of processing, N-linked core structure contains mannose (which consists of 8-alpha-mannosyl residues, one beta-mannosyl residue, and chitobiose). In terms of tissue distribution, secreted from the hypopharyngeal glands of the worker honey bee (at protein level); expression peaks at 12 days post eclosion. Expressed in the brains of adult worker bees peaking at 12 days post eclosion (at protein level). Expressed in the spermatheca of adult queen bees (at protein level); Expression levels are higher in mated queens than in virgin queens.

The protein resides in the secreted. Highly abundant protein component of royal jelly, a substance produced in the hypopharyngeal gland containing proteins, free amino acids, fatty acids, sugars and other nutrients, which is fed to developing larvae by worker nurse bees. Major royal jelly proteins (MRJPs) are high in essential amino acids and probably have a nutritional function in larval food. All larvae are fed some royal jelly (also known as worker jelly) early in their development but it forms the principal source of nutrition for larvae destined to become queen bees. Produced in the spermatheca of adult queen bees, along with other major royal jelly proteins, where it may act as a nutrient supply for sperm stored by mated queens, or be involved in energy metabolism. This Apis mellifera (Honeybee) protein is Major royal jelly protein 2.